A 274-amino-acid chain; its full sequence is 2,3,4,5-tetrahydropyridine-2,6-dicarboxylate N-succinyltransferase (274 aa).

Substrate is bound by residues Arg-104 and Asp-141.

The protein belongs to the transferase hexapeptide repeat family. Homotrimer.

The protein localises to the cytoplasm. It catalyses the reaction (S)-2,3,4,5-tetrahydrodipicolinate + succinyl-CoA + H2O = (S)-2-succinylamino-6-oxoheptanedioate + CoA. Its pathway is amino-acid biosynthesis; L-lysine biosynthesis via DAP pathway; LL-2,6-diaminopimelate from (S)-tetrahydrodipicolinate (succinylase route): step 1/3. The polypeptide is 2,3,4,5-tetrahydropyridine-2,6-dicarboxylate N-succinyltransferase (Salmonella typhi).